The sequence spans 614 residues: Polyamine transporter 2 (614 aa).

Residues 1–40 (MSDQESVVSFNSQNTSMVDVEGQQPQQYVPSKTNSRANQL) are disordered. The Cytoplasmic segment spans residues 1 to 173 (MSDQESVVSF…WPSWVRWSYT (173 aa)). Ser50 carries the phosphoserine modification. Positions 99 to 122 (RTASALSRTRTKQLNRTATNSSST) are enriched in polar residues. The disordered stretch occupies residues 99–144 (RTASALSRTRTKQLNRTATNSSSTGKEEMEEEETEEREDQSGENEL). A compositionally biased stretch (acidic residues) spans 126 to 144 (EMEEEETEEREDQSGENEL). The chain crosses the membrane as a helical span at residues 174–194 (VLLSILVICVAYGSACISGGL). The Extracellular segment spans residues 195-206 (GTVEKKYHVGME). A helical membrane pass occupies residues 207–227 (AAILSCSLMVIGFSLGPLIWS). Residues 228–236 (PVSDLYGRR) are Cytoplasmic-facing. Residues 237-257 (VAYFVSMGLYVIFNIPCALAP) traverse the membrane as a helical segment. Residues 258–266 (NLGCLLACR) are Extracellular-facing. Residues 267-287 (FLCGVWSSSGLCLVGGSIADM) form a helical membrane-spanning segment. Over 288 to 297 (FPSETRGKAI) the chain is Cytoplasmic. A helical membrane pass occupies residues 298-318 (AFFAFAPYVGPVVGPLVNGFI). At 319–326 (SVSTGRMD) the chain is on the extracellular side. Residues 327-347 (LIFWVNMAFAGVMWIISSAIP) form a helical membrane-spanning segment. Over 348 to 407 (ETYAPVILKRKAARLRKETGNPKIMTEQEAQGVSMSEMMRACLLRPLYFAVTEPVLVATC) the chain is Cytoplasmic. A helical membrane pass occupies residues 408 to 428 (FYVCLIYSLLYAFFFAFPVIF). The Extracellular segment spans residues 429 to 437 (GELYGYKDN). Residues 438-458 (LVGLMFIPIVIGALWALATTF) form a helical membrane-spanning segment. Topologically, residues 459–478 (YCENKYLQIVKQRKPTPEDR) are cytoplasmic. A helical transmembrane segment spans residues 479 to 499 (LLGAKIGAPFAAIALWILGAT). The Extracellular segment spans residues 500–503 (AYKH). The helical transmembrane segment at 504-524 (IIWVGPASAGLAFGFGMVLIY) threads the bilayer. At 525–541 (YSLNNYIIDCYVQYASS) the chain is on the cytoplasmic side. The chain crosses the membrane as a helical span at residues 542–562 (ALATKVFLRSAGGAAFPLFTI). At 563–574 (QMYHKLNLHWGS) the chain is on the extracellular side. A helical membrane pass occupies residues 575-595 (WLLAFISTAMIALPFAFSYWG). The Cytoplasmic segment spans residues 596-614 (KGLRHKLSKKDYSIDSVEM).

Belongs to the major facilitator superfamily. DHA1 family. Polyamines/proton antiporter (TC 2.A.1.2.16) subfamily.

The protein resides in the cell membrane. Its function is as follows. Cell membrane polyamine/proton antiporter, involved in the detoxification of excess polyamines in the cytoplasm. Recognizes spermine, but not spermidine. The protein is Polyamine transporter 2 (TPO2) of Saccharomyces cerevisiae (strain ATCC 204508 / S288c) (Baker's yeast).